Consider the following 170-residue polypeptide: Large ribosomal subunit protein uL10 (170 aa).

The protein belongs to the universal ribosomal protein uL10 family. As to quaternary structure, part of the ribosomal stalk of the 50S ribosomal subunit. The N-terminus interacts with L11 and the large rRNA to form the base of the stalk. The C-terminus forms an elongated spine to which L12 dimers bind in a sequential fashion forming a multimeric L10(L12)X complex.

Forms part of the ribosomal stalk, playing a central role in the interaction of the ribosome with GTP-bound translation factors. The polypeptide is Large ribosomal subunit protein uL10 (Corynebacterium urealyticum (strain ATCC 43042 / DSM 7109)).